Here is a 474-residue protein sequence, read N- to C-terminus: 3-isopropylmalate dehydratase large subunit (474 aa).

Positions 353, 414, and 417 each coordinate [4Fe-4S] cluster.

This sequence belongs to the aconitase/IPM isomerase family. LeuC type 1 subfamily. As to quaternary structure, heterodimer of LeuC and LeuD. Requires [4Fe-4S] cluster as cofactor.

The catalysed reaction is (2R,3S)-3-isopropylmalate = (2S)-2-isopropylmalate. The protein operates within amino-acid biosynthesis; L-leucine biosynthesis; L-leucine from 3-methyl-2-oxobutanoate: step 2/4. In terms of biological role, catalyzes the isomerization between 2-isopropylmalate and 3-isopropylmalate, via the formation of 2-isopropylmaleate. The sequence is that of 3-isopropylmalate dehydratase large subunit from Pseudomonas paraeruginosa (strain DSM 24068 / PA7) (Pseudomonas aeruginosa (strain PA7)).